A 557-amino-acid polypeptide reads, in one-letter code: Hepatocyte nuclear factor 1-beta (557 aa).

A dimerization region spans residues 1–31 (MVSKLTSLQQELLSALLSSGVTKEVLIQALE). In terms of domain architecture, HNF-p1 spans 1–32 (MVSKLTSLQQELLSALLSSGVTKEVLIQALEE). Residues serine 49, serine 52, serine 75, and serine 80 each carry the phosphoserine modification. The tract at residues 66-85 (TNGHAKGRLSGDEGSEDGDD) is disordered. One can recognise a POU-specific atypical domain in the interval 93–188 (KELQALNTEE…ILRQFNQTVQ (96 aa)). The segment at residues 231–311 (MRRNRFKWGP…NRRKEEAFRQ (81 aa)) is a DNA-binding region (homeobox; HNF1-type). The tract at residues 324 to 370 (HNLNPLLTHGSPHHQPSSSPPNKLSGVRYSQPGNNEVTSSSTISHHG) is disordered. Residues 354–370 (QPGNNEVTSSSTISHHG) are compositionally biased toward polar residues.

It belongs to the HNF1 homeobox family. In terms of assembly, binds DNA as a dimer. Can form homodimer or heterodimer with HNF1-alpha. Interacts (via HNF-p1 domain) with PCBD1; the interaction increases its transactivation activity. In terms of tissue distribution, liver, kidney and intestine.

It is found in the nucleus. Functionally, transcription factor that binds to the inverted palindrome 5'-GTTAATNATTAAC-3'. Binds to the FPC element in the cAMP regulatory unit of the PLAU gene. Transcriptional activity is increased by coactivator PCBD1. The chain is Hepatocyte nuclear factor 1-beta (Hnf1b) from Rattus norvegicus (Rat).